A 422-amino-acid chain; its full sequence is tRNA hydroxylation protein P (422 aa).

The signal sequence occupies residues Met1 to Ala58.

Belongs to the peptidase U32 family.

Functionally, involved in prephenate-dependent formation of 5-hydroxyuridine (ho5U) modification at position 34 in tRNAs, the first step in 5-carboxymethoxyuridine (cmo5U) biosynthesis. This Helicobacter pylori (strain J99 / ATCC 700824) (Campylobacter pylori J99) protein is tRNA hydroxylation protein P.